A 718-amino-acid polypeptide reads, in one-letter code: Coiled-coil domain-containing protein 157 (718 aa).

Positions 300-603 (LRAQLEDAEG…LTKIREVAQQ (304 aa)) form a coiled coil. Positions 469–482 (RGSLDEAEAQRSEL) are enriched in basic and acidic residues. Disordered regions lie at residues 469–490 (RGSLDEAEAQRSELEEQLQSLQ) and 617–690 (PPYK…TQNP). Residues 639–659 (TGRRQSPGSRTSSTGRTHPGG) show a composition bias toward low complexity.

The sequence is that of Coiled-coil domain-containing protein 157 (Ccdc157) from Mus musculus (Mouse).